Reading from the N-terminus, the 671-residue chain is Spartin (671 aa).

Position 1 is an N-acetylmethionine (methionine 1). The MIT domain occupies 16–94; it reads IKEAYEKAFM…LQNVRTRLEI (79 aa). Positions 110–175 are disordered; it reads VPKLYPEFPP…CPAEAPPAYS (66 aa). Basic and acidic residues predominate over residues 118–128; sequence PPKDACKKSPE. Serine 126 is modified (phosphoserine). Positions 143–158 are enriched in low complexity; the sequence is GSASAACAGPSGAPSA. Positions 159 to 174 are enriched in pro residues; the sequence is LPVPSPSCPAEAPPAY. Residues 190 to 385 form a ubiquitin-binding region (UBR) domain region; the sequence is DSGEFSSVGE…SIDQGSKDAR (196 aa). The short motif at 193-200 is the LC3-interacting region (LIR); mediates interaction with MAP1LC3A AND MAP1LC3C element; the sequence is EFSSVGED. The tract at residues 346–421 is disordered; that stretch reads FQIPGRSSHP…SSEEKSKELP (76 aa). Lysine 360 participates in a covalent cross-link: Glycyl lysine isopeptide (Lys-Gly) (interchain with G-Cter in ubiquitin). The segment covering 369-379 has biased composition (low complexity); sequence QSSSSGSSIDQ. The segment covering 384–393 has biased composition (basic residues); that stretch reads ARHKGKRGKK. Positions 431–615 constitute a Senescence domain; the sequence is ILSGASWVSW…YNIDNIGIKA (185 aa). The tract at residues 435–507 is required for localization to lipid droplets; it reads ASWVSWGLVK…LVDGVCTVAN (73 aa). Serine 474 is modified (phosphoserine). Positions 635-671 are disordered; it reads VERPQRESQGGATSTEGRRDIGKQVEEEKPGAGKKDK. Residues 650 to 671 show a composition bias toward basic and acidic residues; that stretch reads EGRRDIGKQVEEEKPGAGKKDK.

Interacts with ITCH and WWP1. Interacts (via MIT domain) with IST1; leading to the recruitment of SPART to midbodies. Interacts with MAP1LC3A and MAP1LC3C. In terms of processing, ubiquitinated; ubiquitination does not require ITCH and WWP1. As to expression, brain (at protein level).

It localises to the cytoplasm. It is found in the midbody. Its subcellular location is the lipid droplet. Its function is as follows. Lipophagy receptor that plays an important role in lipid droplet (LD) turnover in motor neurons. Localizes to LDs and interacts with components of the autophagy machinery, such as MAP1LC3A/C proteins to deliver LDs to autophagosomes for degradation via lipophagy. Lipid transfer protein required for lipid droplet degradation, including by lipophagy. Can bind and transfer all lipid species found in lipid droplets, from phospholipids to triglycerides and sterol esters but the direction of lipid transfer by spartin and its cargos are unknown. May be implicated in endosomal trafficking, or microtubule dynamics, or both. Participates in cytokinesis. In Mus musculus (Mouse), this protein is Spartin.